Consider the following 102-residue polypeptide: NADH-quinone oxidoreductase subunit K (102 aa).

3 consecutive transmembrane segments (helical) span residues 6–26 (FEHALVLASVLFVLGLVALLI), 30–50 (LIVMLMSVEIMLNAAGLAFIA), and 62–82 (VMFLLILTLAAAEVGVGLGLG).

The protein belongs to the complex I subunit 4L family. NDH-1 is composed of 14 different subunits. Subunits NuoA, H, J, K, L, M, N constitute the membrane sector of the complex.

The protein localises to the cell inner membrane. The catalysed reaction is a quinone + NADH + 5 H(+)(in) = a quinol + NAD(+) + 4 H(+)(out). Functionally, NDH-1 shuttles electrons from NADH, via FMN and iron-sulfur (Fe-S) centers, to quinones in the respiratory chain. The immediate electron acceptor for the enzyme in this species is believed to be ubiquinone. Couples the redox reaction to proton translocation (for every two electrons transferred, four hydrogen ions are translocated across the cytoplasmic membrane), and thus conserves the redox energy in a proton gradient. This chain is NADH-quinone oxidoreductase subunit K, found in Methylococcus capsulatus (strain ATCC 33009 / NCIMB 11132 / Bath).